The primary structure comprises 334 residues: Putative B3 domain-containing protein At5g66980 (334 aa).

DNA-binding regions (TF-B3) lie at residues 8-105 and 218-317; these read LQFF…FAND and HPHF…VSGR.

It localises to the nucleus. This Arabidopsis thaliana (Mouse-ear cress) protein is Putative B3 domain-containing protein At5g66980.